Consider the following 926-residue polypeptide: Progesterone receptor (926 aa).

The segment at 1-48 (MTELQAKDPQVLHTSGASPSPPHIGSPLLARLDSGPFQGSQHSDVSSV) is disordered. Residues 1–165 (MTELQAKDPQ…PATKGLLSPL (165 aa)) form an AF3; mediates transcriptional activation (in isoform B) region. Residues 1 to 559 (MTELQAKDPQ…YGFDSLPQKI (559 aa)) are modulating, Pro-Rich. Lys-7 is covalently cross-linked (Glycyl lysine isopeptide (Lys-Gly) (interchain with G-Cter in SUMO)). At Ser-20 the chain carries Phosphoserine. The LXXL motif 1 signature appears at 56–60 (LDGLL). Ser-82 is subject to Phosphoserine. The short motif at 116–120 (LDSLL) is the LXXL motif 1 element. Residues Ser-131 and Ser-163 each carry the phosphoserine modification. The interval 166-305 (MSRPEIKAGD…LATTVVDFIH (140 aa)) is mediates transcriptional transrepression (in isoform A). A disordered region spans residues 168–256 (RPEIKAGDSS…GTGSGGGVAA (89 aa)). Residues 184–188 (KVLPK) carry the Nuclear localization signal motif. Residues Ser-191 and Ser-214 each carry the phosphoserine modification. At Ser-294 the chain carries Phosphoserine; by MAPK1. Positions 327–364 (DSYDGGATAQGPFAPPRGSPSAPSPPVPCGDFPDCTYP) are disordered. Positions 339-354 (FAPPRGSPSAPSPPVP) are enriched in pro residues. Position 345 is a phosphoserine; by MAPK (Ser-345). A Glycyl lysine isopeptide (Lys-Gly) (interchain with G-Cter in SUMO); alternate cross-link involves residue Lys-388. Residue Lys-388 forms a Glycyl lysine isopeptide (Lys-Gly) (interchain with G-Cter in ubiquitin); alternate linkage. Residues 391–447 (EEGADAAVRSPRPYLSAGASSSTFPDFPLAPAPQRAPSSRPGEAAVAGGPSSAAVSP) form a disordered region. Ser-400 carries the phosphoserine; by CDK2 modification. Residues 422–447 (APQRAPSSRPGEAAVAGGPSSAAVSP) are compositionally biased toward low complexity. The segment at 453 to 539 (SALECILYKA…VYPPYLNYLR (87 aa)) is AF1; mediates transcriptional activation. Lys-524 is covalently cross-linked (Glycyl lysine isopeptide (Lys-Gly) (interchain with G-Cter in SUMO)). A DNA-binding region (nuclear receptor) is located at residues 557–632 (QKICLICGDE…AGMVLGGRKF (76 aa)). 2 NR C4-type zinc fingers span residues 560–580 (CLIC…CGSC) and 596–615 (CAGR…CPAC). Residue Ser-669 is modified to Phosphoserine. In terms of domain architecture, NR LBD spans 672–906 (QEIQLVPPLI…EFPEMMSEVI (235 aa)). The segment at 673 to 926 (EIQLVPPLIN…MVKPLLFHKK (254 aa)) is AF2; mediates transcriptional activation. Arg-759 is a binding site for progesterone.

The protein belongs to the nuclear hormone receptor family. NR3 subfamily. Interacts with SMARD1 and UNC45A. Interacts with CUEDC2; the interaction promotes ubiquitination, decreases sumoylation, and represses transcriptional activity. Interacts with PIAS3; the interaction promotes sumoylation of PR in a hormone-dependent manner, inhibits DNA-binding, and alters nuclear export. Interacts with SP1; the interaction requires ligand-induced phosphorylation on Ser-294 by ERK1/2 MAPK. Interacts with PRMT2. Isoform A interacts with NCOR2. Isoform B (but not isoform A) interacts with NCOA2 and NCOA1. Isoform B (but not isoform A) interacts with KLF9. Phosphorylated on multiple serine sites. Several of these sites are hormone-dependent. Phosphorylation on Ser-294 is highly hormone-dependent and modulates ubiquitination and sumoylation on Lys-388. Phosphorylation on Ser-345 also requires induction by hormone. Basal phosphorylation on Ser-82, Ser-163, Ser-191 and Ser-400 is increased in response to progesterone and can be phosphorylated in vitro by the CDK2-A1 complex. Increased levels of phosphorylation on Ser-400 also in the presence of EGF, heregulin, IGF, PMA and FBS. Phosphorylation at this site by CDK2 is ligand-independent, and increases nuclear translocation and transcriptional activity. Phosphorylation at Ser-163 and Ser-294, but not at Ser-191, is impaired during the G(2)/M phase of the cell cycle. Phosphorylation on Ser-345 by ERK1/2 MAPK is required for interaction with SP1. Post-translationally, sumoylation is hormone-dependent and represses transcriptional activity. Sumoylation on all three sites is enhanced by PIAS3. Desumoylated by SENP1. Sumoylation on Lys-388, the main site of sumoylation, is repressed by ubiquitination on the same site, and modulated by phosphorylation at Ser-294. In terms of processing, ubiquitination is hormone-dependent and represses sumoylation on the same site. Promoted by MAPK-mediated phosphorylation on Ser-294. Ubiquitinated by UBR5, leading to its degradation: UBR5 specifically recognizes and binds ligand-bound PGR when it is not associated with coactivators (NCOAs). In presence of NCOAs, the UBR5-degron is not accessible, preventing its ubiquitination and degradation. Palmitoylated by ZDHHC7 and ZDHHC21. Palmitoylation is required for plasma membrane targeting and for rapid intracellular signaling via ERK and AKT kinases and cAMP generation. In terms of tissue distribution, expression of isoform A and isoform B in mammary epithelial cells is temporally and spatially separated during normal mammary gland development. Isoform A and isoform B are expressed in the pituitary. Isoform A and isoform B are differentially expressed in the ovary and oviduct, and the level of expression is dependent on both the cell type and estrous cycle stage.

The protein localises to the nucleus. Its subcellular location is the cytoplasm. The steroid hormones and their receptors are involved in the regulation of eukaryotic gene expression and affect cellular proliferation and differentiation in target tissues. Depending on the isoform, progesterone receptor functions as a transcriptional activator or repressor. In terms of biological role, ligand-dependent transdominant repressor of steroid hormone receptor transcriptional activity including repression of its isoform B, MR and ER. Transrepressional activity may involve recruitment of corepressor NCOR2. Functionally, transcriptional activator of several progesteron-dependent promoters in a variety of cell types. Involved in activation of SRC-dependent MAPK signaling on hormone stimulation. This chain is Progesterone receptor (Pgr), found in Mus musculus (Mouse).